Reading from the N-terminus, the 332-residue chain is UPF0285 protein MK0078 (332 aa).

The protein belongs to the UPF0285 family.

The protein is UPF0285 protein MK0078 of Methanopyrus kandleri (strain AV19 / DSM 6324 / JCM 9639 / NBRC 100938).